A 164-amino-acid chain; its full sequence is Large ribosomal subunit protein uL15 (164 aa).

2 disordered regions span residues 1 to 49 (MTKL…SIAG) and 143 to 164 (EKAG…SAEA). The span at 22 to 36 (RGPGSGKGKTAGRGV) shows a compositional bias: gly residues.

This sequence belongs to the universal ribosomal protein uL15 family. As to quaternary structure, part of the 50S ribosomal subunit.

Its function is as follows. Binds to the 23S rRNA. The chain is Large ribosomal subunit protein uL15 from Phenylobacterium zucineum (strain HLK1).